A 208-amino-acid chain; its full sequence is Putative RING finger protein 413R (208 aa).

Residues 1-87 (MDAIFYPLPI…RHWSDDDSDR (87 aa)) are disordered. Positions 22–71 (DFQEEDFQEEDFQEEDFQEEDFQEEDEDEEDEEVNEYPSDLDDEYPDSDY) are enriched in acidic residues. Positions 72-82 (YDERSDRHWSD) are enriched in basic and acidic residues. Residues 83 to 147 (DDSDRDLDDL…KLTTLSKNLT (65 aa)) adopt a coiled-coil conformation. The RING-type zinc-finger motif lies at 148–196 (CIICLTNQVQILTIPCGHLIMCNPCSLNLNNSVCTRGVNSNYEKCPKCR).

The chain is Putative RING finger protein 413R (EF2) from Acheta domesticus (House cricket).